Reading from the N-terminus, the 94-residue chain is Aspartyl/glutamyl-tRNA(Asn/Gln) amidotransferase subunit C (94 aa).

Belongs to the GatC family. Heterotrimer of A, B and C subunits.

It carries out the reaction L-glutamyl-tRNA(Gln) + L-glutamine + ATP + H2O = L-glutaminyl-tRNA(Gln) + L-glutamate + ADP + phosphate + H(+). The catalysed reaction is L-aspartyl-tRNA(Asn) + L-glutamine + ATP + H2O = L-asparaginyl-tRNA(Asn) + L-glutamate + ADP + phosphate + 2 H(+). Functionally, allows the formation of correctly charged Asn-tRNA(Asn) or Gln-tRNA(Gln) through the transamidation of misacylated Asp-tRNA(Asn) or Glu-tRNA(Gln) in organisms which lack either or both of asparaginyl-tRNA or glutaminyl-tRNA synthetases. The reaction takes place in the presence of glutamine and ATP through an activated phospho-Asp-tRNA(Asn) or phospho-Glu-tRNA(Gln). In Caldicellulosiruptor bescii (strain ATCC BAA-1888 / DSM 6725 / KCTC 15123 / Z-1320) (Anaerocellum thermophilum), this protein is Aspartyl/glutamyl-tRNA(Asn/Gln) amidotransferase subunit C.